The primary structure comprises 516 residues: Acetylcholine receptor subunit alpha-like (516 aa).

Positions 1-21 are cleaved as a signal peptide; it reads MRSVTKYYLHGVVLFATGCAG. The Extracellular portion of the chain corresponds to 22-243; sequence NPDAKRLYDD…ITMRRKTLFY (222 aa). N-linked (GlcNAc...) asparagine glycans are attached at residues asparagine 45 and asparagine 132. Cystine bridges form between cysteine 149–cysteine 163 and cysteine 222–cysteine 223. N-linked (GlcNAc...) asparagine glycosylation occurs at asparagine 233. Transmembrane regions (helical) follow at residues 244–264, 274–294, and 306–326; these read TVNLIIPCMGISFLTVLVFYL, LSISILLSLTVFFLLLAEIIP, and FVLFTMILDTFSICVTVVVLN. At 327–465 the chain is on the cytoplasmic side; sequence VHFRSPQTHT…WKYVAMVLDR (139 aa). The chain crosses the membrane as a helical span at residues 466 to 486; the sequence is PFLWIFTLAVVVGSAGIILQA.

The protein belongs to the ligand-gated ion channel (TC 1.A.9) family. Acetylcholine receptor (TC 1.A.9.1) subfamily.

The protein resides in the postsynaptic cell membrane. It localises to the cell membrane. Its function is as follows. After binding acetylcholine, the AChR responds by an extensive change in conformation that affects all subunits and leads to opening of an ion-conducting channel across the plasma membrane. The chain is Acetylcholine receptor subunit alpha-like (ARA1) from Manduca sexta (Tobacco hawkmoth).